Consider the following 310-residue polypeptide: tRNA-cytidine(32) 2-sulfurtransferase (310 aa).

The short motif at 58–63 is the PP-loop motif element; it reads SGGKDS. 3 residues coordinate [4Fe-4S] cluster: cysteine 133, cysteine 136, and cysteine 224.

This sequence belongs to the TtcA family. As to quaternary structure, homodimer. It depends on Mg(2+) as a cofactor. The cofactor is [4Fe-4S] cluster.

Its subcellular location is the cytoplasm. It carries out the reaction cytidine(32) in tRNA + S-sulfanyl-L-cysteinyl-[cysteine desulfurase] + AH2 + ATP = 2-thiocytidine(32) in tRNA + L-cysteinyl-[cysteine desulfurase] + A + AMP + diphosphate + H(+). It participates in tRNA modification. Catalyzes the ATP-dependent 2-thiolation of cytidine in position 32 of tRNA, to form 2-thiocytidine (s(2)C32). The sulfur atoms are provided by the cysteine/cysteine desulfurase (IscS) system. The polypeptide is tRNA-cytidine(32) 2-sulfurtransferase (Paracidovorax citrulli (strain AAC00-1) (Acidovorax citrulli)).